Here is a 705-residue protein sequence, read N- to C-terminus: CAP-Gly domain-containing linker protein 4 (705 aa).

ANK repeat units follow at residues 65 to 101 (TSVS…NVND), 149 to 180 (TNMN…DVDA), and 186 to 215 (NFGT…NPAF). The CAP-Gly 1 domain occupies 303-345 (GTTEFASGQWAGIELDEPEGKNNGSVGKVQYFKCAPKYGIFAP). Disordered regions lie at residues 391–410 (MTSK…PGEE) and 431–479 (TSSL…ANNS). The span at 441–452 (PKKQNAISSNKK) shows a compositional bias: polar residues. A compositionally biased stretch (low complexity) spans 455-479 (SKSPSLSSRASAGLNSSATSTANNS). Residues 505–547 (GTTNFAPGYWYGIELEKPHGKNDGSVGGVQYFSCSPRYGIFAP) form the CAP-Gly 2 domain. A phosphoserine mark is found at Ser-557 and Ser-609. Residues 644-686 (GPTDFASGIWLGLELRSAKGKNDGSVGDKRYFTCKPNHGVLVR) form the CAP-Gly 3 domain.

In Homo sapiens (Human), this protein is CAP-Gly domain-containing linker protein 4 (CLIP4).